An 893-amino-acid polypeptide reads, in one-letter code: AP-4 complex accessory subunit RUSC1 (893 aa).

Disordered regions lie at residues 31–223 (ELRE…GKAE), 237–332 (EKTE…KDRS), 339–358 (SPDTELPPTGSLGGSLAPPR), and 366–444 (LRSR…RAHA). Over residues 77-87 (HGSSIENQQDP) the composition is skewed to polar residues. 2 stretches are compositionally biased toward low complexity: residues 95–117 (SPSDPGCSSSLSSCSDLSPDESP) and 149–165 (PSTCSPDSFCCSPDSCS). The segment covering 177 to 187 (SNCNALTTCQD) has biased composition (polar residues). The span at 237–257 (EKTEAGWKTIEDSDSGRKTDE) shows a compositional bias: basic and acidic residues. 2 stretches are compositionally biased toward pro residues: residues 373–382 (QPPPVPPRDP) and 390–399 (PPRPPPPPVP). Residues 463–598 (MAEAQSGTGQ…FHAFILGLLN (136 aa)) are interaction with TRAF6. An RUN domain is found at 515–659 (DVGHLVLTTL…LTFHLDLLFE (145 aa)). The segment at 599 to 665 (TKQLELWFSS…LLFEHHHHLP (67 aa)) is interaction with IKBKG. 2 disordered regions span residues 700–721 (RGTSGESTTDSSTPSARPPAGS) and 751–772 (HGTTAEAAQEAPPPTEQTTPGR). Low complexity-rich tracts occupy residues 702–714 (TSGESTTDSSTPS) and 754–770 (TAEAAQEAPPPTEQTTP). Residues 835-893 (QADRAVRALCDHTAAGPDQLSFQRGELLRVIATVDEDWLRCGRDGVEGLVPVGYTSLVL) form the SH3 domain.

Associated component of the adapter-like complex 4 (AP-4). Interacts with IKBKG and TRAF6. Interacts with F-actin, acetylated actin, TUBB3, STX1A, KIF5B and KLC1. Post-translationally, phosphorylated on serine residues following nuclear translocation. In terms of processing, polyubiquitinated; polyubiquitination involves TRAF6. In terms of tissue distribution, expressed in brain, brain stem and spinal cord (at protein level).

The protein resides in the cytoplasm. It localises to the nucleus. Its subcellular location is the cytoskeleton. It is found in the cytoplasmic vesicle. The protein localises to the early endosome. The protein resides in the postsynaptic density. It localises to the golgi apparatus. Associates with the adapter-like complex 4 (AP-4) and may therefore play a role in vesicular trafficking of proteins at the trans-Golgi network. Signaling adapter which plays a role in neuronal differentiation. Involved in regulation of NGF-dependent neurite outgrowth. May play a role in neuronal vesicular trafficking, specifically involving pre-synaptic membrane proteins. Seems to be involved in signaling pathways that are regulated by the prolonged activation of MAPK. Can regulate the polyubiquitination of IKBKG and thus may be involved in regulation of the NF-kappa-B pathway. This chain is AP-4 complex accessory subunit RUSC1, found in Mus musculus (Mouse).